A 423-amino-acid polypeptide reads, in one-letter code: UPF0229 protein PSPTO_0546 (423 aa).

The tract at residues 65–110 (HHGRGGKQTVVHPGNKEFTTGEHIARPQGGAGGKGPGKAGNSGEGM) is disordered. Residues 93-107 (GGAGGKGPGKAGNSG) are compositionally biased toward gly residues.

The protein belongs to the UPF0229 family.

This is UPF0229 protein PSPTO_0546 from Pseudomonas syringae pv. tomato (strain ATCC BAA-871 / DC3000).